The primary structure comprises 345 residues: uncharacterized protein (345 aa).

Its subcellular location is the cell membrane. In terms of biological role, involved in potassium and divalent cation transport. Enhances the transport activity of the cation/potassium transporter CzcD. This is an uncharacterized protein from Bacillus velezensis (strain DSM 23117 / BGSC 10A6 / LMG 26770 / FZB42) (Bacillus amyloliquefaciens subsp. plantarum).